We begin with the raw amino-acid sequence, 421 residues long: UDP-N-acetylglucosamine 1-carboxyvinyltransferase (421 aa).

22–23 (KN) provides a ligand contact to phosphoenolpyruvate. Arginine 93 provides a ligand contact to UDP-N-acetyl-alpha-D-glucosamine. Cysteine 117 acts as the Proton donor in catalysis. At cysteine 117 the chain carries 2-(S-cysteinyl)pyruvic acid O-phosphothioketal. UDP-N-acetyl-alpha-D-glucosamine-binding positions include 122–126 (RPVDQ), aspartate 309, and isoleucine 331.

It belongs to the EPSP synthase family. MurA subfamily.

The protein localises to the cytoplasm. The catalysed reaction is phosphoenolpyruvate + UDP-N-acetyl-alpha-D-glucosamine = UDP-N-acetyl-3-O-(1-carboxyvinyl)-alpha-D-glucosamine + phosphate. It participates in cell wall biogenesis; peptidoglycan biosynthesis. Its function is as follows. Cell wall formation. Adds enolpyruvyl to UDP-N-acetylglucosamine. The protein is UDP-N-acetylglucosamine 1-carboxyvinyltransferase of Albidiferax ferrireducens (strain ATCC BAA-621 / DSM 15236 / T118) (Rhodoferax ferrireducens).